The chain runs to 125 residues: UPF0763 protein NAMH_0545 (125 aa).

The protein belongs to the UPF0763 family.

The sequence is that of UPF0763 protein NAMH_0545 from Nautilia profundicola (strain ATCC BAA-1463 / DSM 18972 / AmH).